The sequence spans 402 residues: Enoyl-[acyl-carrier-protein] reductase [NADH] (402 aa).

Residues 48-53 (GASSGY), 74-75 (FE), 111-112 (DA), and 140-141 (LA) contribute to the NAD(+) site. Residue Y226 coordinates substrate. The active-site Proton donor is the Y236. Residues K245 and 274-276 (VVT) contribute to the NAD(+) site.

The protein belongs to the TER reductase family. Monomer.

It carries out the reaction a 2,3-saturated acyl-[ACP] + NAD(+) = a (2E)-enoyl-[ACP] + NADH + H(+). The catalysed reaction is a 2,3-saturated acyl-CoA + NAD(+) = a (2E)-enoyl-CoA + NADH + H(+). It functions in the pathway lipid metabolism; fatty acid biosynthesis. In terms of biological role, involved in the final reduction of the elongation cycle of fatty acid synthesis (FAS II). Catalyzes the reduction of a carbon-carbon double bond in an enoyl moiety that is covalently linked to an acyl carrier protein (ACP). It can also use crotonyl-CoA. This Xanthomonas oryzae pv. oryzae (strain MAFF 311018) protein is Enoyl-[acyl-carrier-protein] reductase [NADH].